We begin with the raw amino-acid sequence, 348 residues long: UDP-3-O-acylglucosamine N-acyltransferase (348 aa).

The Proton acceptor role is filled by histidine 241.

Belongs to the transferase hexapeptide repeat family. LpxD subfamily. Homotrimer.

It catalyses the reaction a UDP-3-O-[(3R)-3-hydroxyacyl]-alpha-D-glucosamine + a (3R)-hydroxyacyl-[ACP] = a UDP-2-N,3-O-bis[(3R)-3-hydroxyacyl]-alpha-D-glucosamine + holo-[ACP] + H(+). It functions in the pathway bacterial outer membrane biogenesis; LPS lipid A biosynthesis. Functionally, catalyzes the N-acylation of UDP-3-O-acylglucosamine using 3-hydroxyacyl-ACP as the acyl donor. Is involved in the biosynthesis of lipid A, a phosphorylated glycolipid that anchors the lipopolysaccharide to the outer membrane of the cell. This is UDP-3-O-acylglucosamine N-acyltransferase from Neisseria meningitidis serogroup C / serotype 2a (strain ATCC 700532 / DSM 15464 / FAM18).